We begin with the raw amino-acid sequence, 954 residues long: Glycine dehydrogenase (decarboxylating) (954 aa).

Lys704 is modified (N6-(pyridoxal phosphate)lysine).

It belongs to the GcvP family. In terms of assembly, the glycine cleavage system is composed of four proteins: P, T, L and H. The cofactor is pyridoxal 5'-phosphate.

The enzyme catalyses N(6)-[(R)-lipoyl]-L-lysyl-[glycine-cleavage complex H protein] + glycine + H(+) = N(6)-[(R)-S(8)-aminomethyldihydrolipoyl]-L-lysyl-[glycine-cleavage complex H protein] + CO2. Functionally, the glycine cleavage system catalyzes the degradation of glycine. The P protein binds the alpha-amino group of glycine through its pyridoxal phosphate cofactor; CO(2) is released and the remaining methylamine moiety is then transferred to the lipoamide cofactor of the H protein. In Vibrio vulnificus (strain YJ016), this protein is Glycine dehydrogenase (decarboxylating).